Here is a 437-residue protein sequence, read N- to C-terminus: Type II methyltransferase M.HgiCII (437 aa).

Positions 4–431 (FRFIDLFAGI…KALPNDHLFE (428 aa)) constitute an SAM-dependent MTase C5-type domain. The active site involves Cys75.

This sequence belongs to the class I-like SAM-binding methyltransferase superfamily. C5-methyltransferase family.

The enzyme catalyses a 2'-deoxycytidine in DNA + S-adenosyl-L-methionine = a 5-methyl-2'-deoxycytidine in DNA + S-adenosyl-L-homocysteine + H(+). Functionally, a methylase that recognizes the double-stranded sequence 5'-GGWCC-3', methylates C-? on both strands and protects the DNA from cleavage by the HgiCII endonuclease. This is Type II methyltransferase M.HgiCII from Herpetosiphon aurantiacus (Herpetosiphon giganteus).